The chain runs to 2145 residues: Glutamate synthase [NADH] (2145 aa).

The propeptide occupies M1–A53. C54 acts as the For GATase activity in catalysis. The Glutamine amidotransferase type-2 domain occupies C54–Q455. L1132–R1189 is a binding site for FMN. Residues C1185, C1191, and C1196 each coordinate [3Fe-4S] cluster. A coiled-coil region spans residues K1551 to E1600. G1928–R1942 provides a ligand contact to NAD(+). A Phosphothreonine modification is found at T2070.

Belongs to the glutamate synthase family. In terms of assembly, homotrimer. Requires [3Fe-4S] cluster as cofactor. The cofactor is FAD. It depends on FMN as a cofactor.

The enzyme catalyses 2 L-glutamate + NAD(+) = L-glutamine + 2-oxoglutarate + NADH + H(+). It functions in the pathway amino-acid biosynthesis; L-glutamate biosynthesis via GLT pathway; L-glutamate from 2-oxoglutarate and L-glutamine (NAD(+) route): step 1/1. The protein operates within energy metabolism; nitrogen metabolism. Inhibited by homocysteine sulfonamide. In terms of biological role, forms L-glutamate from L-glutamine and 2-oxoglutarate. Represents an alternative pathway to L-glutamate dehydrogenase for the biosynthesis of L-glutamate. Participates with glutamine synthetase in ammonia assimilation processes. The enzyme is specific for NADH, L-glutamine and 2-oxoglutarate. The protein is Glutamate synthase [NADH] (GLT1) of Saccharomyces cerevisiae (strain ATCC 204508 / S288c) (Baker's yeast).